Reading from the N-terminus, the 376-residue chain is Probable allantoicase (376 aa).

This sequence belongs to the allantoicase family.

The enzyme catalyses allantoate + H2O = (S)-ureidoglycolate + urea. The protein operates within nitrogen metabolism; (S)-allantoin degradation; (S)-ureidoglycolate from allantoate (aminidohydrolase route): step 1/1. The chain is Probable allantoicase from Streptomyces coelicolor (strain ATCC BAA-471 / A3(2) / M145).